The chain runs to 239 residues: uncharacterized protein (239 aa).

This is an uncharacterized protein from Edwardsiella ictaluri (strain 93-146).